We begin with the raw amino-acid sequence, 388 residues long: Acyl-CoA dehydrogenase fadE12 (388 aa).

The protein belongs to the acyl-CoA dehydrogenase family. It depends on FAD as a cofactor.

It catalyses the reaction a 2,3-saturated acyl-CoA + A = a 2,3-dehydroacyl-CoA + AH2. In Mycobacterium bovis (strain ATCC BAA-935 / AF2122/97), this protein is Acyl-CoA dehydrogenase fadE12 (fadE12).